We begin with the raw amino-acid sequence, 216 residues long: Ribosomal RNA small subunit methyltransferase G (216 aa).

S-adenosyl-L-methionine is bound by residues Gly-83, Met-88, Val-134–Glu-135, and Arg-149.

The protein belongs to the methyltransferase superfamily. RNA methyltransferase RsmG family.

It is found in the cytoplasm. It catalyses the reaction guanosine(527) in 16S rRNA + S-adenosyl-L-methionine = N(7)-methylguanosine(527) in 16S rRNA + S-adenosyl-L-homocysteine. Specifically methylates the N7 position of guanine in position 527 of 16S rRNA. In Pseudomonas entomophila (strain L48), this protein is Ribosomal RNA small subunit methyltransferase G.